A 292-amino-acid polypeptide reads, in one-letter code: ATP synthase gamma chain (292 aa).

This sequence belongs to the ATPase gamma chain family. F-type ATPases have 2 components, CF(1) - the catalytic core - and CF(0) - the membrane proton channel. CF(1) has five subunits: alpha(3), beta(3), gamma(1), delta(1), epsilon(1). CF(0) has three main subunits: a, b and c.

The protein resides in the cell inner membrane. Its function is as follows. Produces ATP from ADP in the presence of a proton gradient across the membrane. The gamma chain is believed to be important in regulating ATPase activity and the flow of protons through the CF(0) complex. The protein is ATP synthase gamma chain of Nitrobacter hamburgensis (strain DSM 10229 / NCIMB 13809 / X14).